A 74-amino-acid chain; its full sequence is Small ribosomal subunit protein bS18 (74 aa).

The protein belongs to the bacterial ribosomal protein bS18 family. As to quaternary structure, part of the 30S ribosomal subunit. Forms a tight heterodimer with protein bS6.

Functionally, binds as a heterodimer with protein bS6 to the central domain of the 16S rRNA, where it helps stabilize the platform of the 30S subunit. The chain is Small ribosomal subunit protein bS18 from Alkalilimnicola ehrlichii (strain ATCC BAA-1101 / DSM 17681 / MLHE-1).